A 492-amino-acid chain; its full sequence is Probable proline dehydrogenase, mitochondrial (492 aa).

This sequence belongs to the proline oxidase family. Requires FAD as cofactor.

It localises to the mitochondrion. It catalyses the reaction L-proline + a quinone = (S)-1-pyrroline-5-carboxylate + a quinol + H(+). In terms of biological role, converts proline to delta-1-pyrroline-5-carboxylate. The protein is Probable proline dehydrogenase, mitochondrial of Schizosaccharomyces pombe (strain 972 / ATCC 24843) (Fission yeast).